Consider the following 278-residue polypeptide: Tryptophan synthase alpha chain (278 aa).

Active-site proton acceptor residues include Glu-50 and Asp-61.

The protein belongs to the TrpA family. As to quaternary structure, tetramer of two alpha and two beta chains.

It carries out the reaction (1S,2R)-1-C-(indol-3-yl)glycerol 3-phosphate + L-serine = D-glyceraldehyde 3-phosphate + L-tryptophan + H2O. It participates in amino-acid biosynthesis; L-tryptophan biosynthesis; L-tryptophan from chorismate: step 5/5. In terms of biological role, the alpha subunit is responsible for the aldol cleavage of indoleglycerol phosphate to indole and glyceraldehyde 3-phosphate. The polypeptide is Tryptophan synthase alpha chain (Rhodopseudomonas palustris (strain BisA53)).